A 389-amino-acid polypeptide reads, in one-letter code: Probable nitrate transporter NarT (389 aa).

The next 12 membrane-spanning stretches (helical) occupy residues Thr-14–Ile-34, Ile-45–Tyr-65, Ile-69–Phe-89, Gly-97–Val-117, Gly-139–Trp-159, Thr-161–Gly-181, Trp-211–Val-231, Gly-246–Phe-266, Ala-268–Ile-288, Leu-294–Phe-314, Ile-331–Ala-351, and Leu-353–Phe-373.

The protein belongs to the major facilitator superfamily. Nitrate/nitrite porter (TC 2.A.1.8) family.

The protein localises to the cell membrane. Its function is as follows. Probably required for nitrate uptake under anoxic conditions. Also possibly involved in excretion of nitrite produced by the dissimilatory reduction of nitrate. The chain is Probable nitrate transporter NarT (narT) from Staphylococcus aureus (strain JH9).